We begin with the raw amino-acid sequence, 470 residues long: Protein ASPARTIC PROTEASE IN GUARD CELL 2 (470 aa).

A signal peptide spans Met1–Ser19. One can recognise a Peptidase A1 domain in the interval Tyr131–Gly466. Asp149 is an active-site residue. 6 disulfides stabilise this stretch: Cys159–Cys162, Cys165–Cys239, Cys186–Cys204, Cys191–Cys199, Cys278–Cys470, and Cys389–Cys431. Residue Asp350 is part of the active site.

This sequence belongs to the peptidase A1 family.

Functionally, aspartic protease that may be involved in drought avoidance through abscisic acid signaling. The chain is Protein ASPARTIC PROTEASE IN GUARD CELL 2 (ASPG2) from Arabidopsis thaliana (Mouse-ear cress).